The following is a 150-amino-acid chain: Ribonuclease H (150 aa).

An RNase H type-1 domain is found at 2 to 143 (PAPILDIFVD…ADELANRAIE (142 aa)). Mg(2+) contacts are provided by Asp11, Glu49, Asp71, and Asp135.

This sequence belongs to the RNase H family. In terms of assembly, monomer. Mg(2+) serves as cofactor.

The protein resides in the cytoplasm. The catalysed reaction is Endonucleolytic cleavage to 5'-phosphomonoester.. Functionally, endonuclease that specifically degrades the RNA of RNA-DNA hybrids. The sequence is that of Ribonuclease H from Dichelobacter nodosus (strain VCS1703A).